Consider the following 501-residue polypeptide: Glutamate--tRNA ligase (501 aa).

The short motif at 21–31 is the 'HIGH' region element; it reads PSPTGTPHVGL. The 'KMSKS' region signature appears at 266-270; the sequence is KLSKR. ATP is bound at residue Lys269.

The protein belongs to the class-I aminoacyl-tRNA synthetase family. Glutamate--tRNA ligase type 1 subfamily. As to quaternary structure, monomer.

The protein localises to the cytoplasm. The enzyme catalyses tRNA(Glu) + L-glutamate + ATP = L-glutamyl-tRNA(Glu) + AMP + diphosphate. Its function is as follows. Catalyzes the attachment of glutamate to tRNA(Glu) in a two-step reaction: glutamate is first activated by ATP to form Glu-AMP and then transferred to the acceptor end of tRNA(Glu). The polypeptide is Glutamate--tRNA ligase (Kineococcus radiotolerans (strain ATCC BAA-149 / DSM 14245 / SRS30216)).